We begin with the raw amino-acid sequence, 324 residues long: MIQVLLVIICLAVFPYQVSSIILESGNINNYEVVYPQKVTALPKGAIQQLEQKYEDAMQYQFKVKGEPVVLHLEKNKDFFPEDYSETHYSPDDREITTNPPVEDHCYYYGHIQNDADSTASISACNGLKGYFTLRGVTYLIEPLKIPESEAHAIYKYENVEKEDEDPKKCEFRRAGTECRPARSECDVAEYCTGQSAECPTDVFHSNGKPCLNNFGYCYNGNCPIMYHQCYALFGPNATVGQDGCFEWNKKGESYFYCRKENDVPIPCAPEDIKCGRLFCELIKNTCKYDYSEDPDYGMVDHGTKCGDGKVCINRHCVDVTTAY.

Positions 1–20 (MIQVLLVIICLAVFPYQVSS) are cleaved as a signal peptide. Residues 21-173 (IILESGNINN…DEDPKKCEFR (153 aa)) constitute a propeptide, or 174 (in a minor form). A Disintegrin; truncated domain is found at 168 to 207 (KKCEFRRAGTECRPARSECDVAEYCTGQSAECPTDVFHSN). Residues 179-192 (CRPARSECDVAEYC) are inhibits platelet aggregation. Intrachain disulfides connect C179–C199, C186–C218, C192–C199, C211–C223, C230–C280, C245–C287, C258–C268, C275–C312, and C306–C317. The D/ECD-tripeptide signature appears at 185–187 (ECD). Ca(2+)-binding residues include D187 and E190. The Ca(2+) site is built by D202 and V203. The N-linked (GlcNAc...) asparagine glycan is linked to N237.

It belongs to the venom metalloproteinase (M12B) family. P-III subfamily. P-IIIe sub-subfamily. As to quaternary structure, monomer. Is able to form a homodimer. Post-translationally, N-glycosylated. Exists in at least six differently N-glycosylated forms. The glycans likely have a stabilizing purpose. Cys-199 forms a disulfide bond with Cys-192 in 90% and with Cys-179 in 10% of the protein molecules; alternative disulfide bonds may have a major effect on the conformation of the protein. In terms of tissue distribution, expressed by the venom gland (at protein level). Expressed by the venom gland.

It is found in the secreted. With respect to regulation, activity may be regulated by the intramolecular thiol-disulfide exchange or disulfide bond switching. Functionally, abolishes platelet aggregation induced by collagen, ADP (IC(50)=292 nM) and arachidonic-acid. The inhibition of collagen-induced platelet aggregation may be due to its ability to bind collagen and block the binding site on collagen for platelets and/or to its ability to bind to the platelet alpha-2/beta-1 collagen receptor (ITGA2/ITGB1) to block its interaction with collagen and hence prevent platelet stimulation. The inhibition of ADP- or arachidonic-acid-induced platelet aggregation may be due to it acting as an antagonist of the ADP receptors or thromboxane-prostanoid receptors of the platelets, respectively. Does not interact with integrins alpha-IIb (ITGA2B) or beta-3 (ITGB3) nor platelet glycoproteins VI (GP6) or IX (GP9) in vitro, however, the detection is dependent on experimental conditions and may happen in vivo. Able to bind to platelet glycoprotein Ib alpha chain (GP1BA) receptor in vitro, although this interaction may have pathologically only limited effect in vivo as it is not able to abolish the von Willebrand factor (vWF)-dependent platelet agglutination induced by ristocetin. Does not affect blood coagulation. The sequence is that of Disintegrin-like/cysteine-rich protein MPIII-3 from Vipera ammodytes ammodytes (Western sand viper).